A 541-amino-acid chain; its full sequence is Tetratricopeptide repeat protein 8 (541 aa).

Residues 14-47 (YFRRRKFQLCADLCTQMLEKSPYDQEPDPELPVH) form a TPR 1 repeat. Residues 118–137 (PITGFLRPSTQSGRPGTMEQ) form a disordered region. TPR repeat units lie at residues 251–284 (WWWKVQIGKCYYRLGMYREAEKQFKSALKQQEMV), 285–317 (DTFLYLAKVYVSLDQPVTALNLFKQGLDKFPGE), 318–351 (VTLLCGIARIYEEMNNMSSAAEYYKEVLKQDNTH), 352–385 (VEAIACIGSNHFYSDQPEIALRFYRRLLQMGIYN), 386–419 (GQLFNNLGLCCFYAQQYDMTLTSFERALSLAENE), 423–456 (ADVWYNLGHVAVGIGDTNLAHQCFRLALVNNNNH), and 457–490 (AEAYNNLAVLEMRKGHVEQARALLQTASSLAPHM).

In terms of assembly, part of BBSome complex, that contains BBS1, BBS2, BBS4, BBS5, BBS7, BBS8/TTC8, BBS9 and BBIP10. Interacts with PCM1. Interacts with CCDC28B. Interacts with PKD1. In terms of tissue distribution, widely expressed.

The protein localises to the cytoplasm. It localises to the cytoskeleton. The protein resides in the microtubule organizing center. Its subcellular location is the centrosome. It is found in the cell projection. The protein localises to the cilium membrane. It localises to the centriolar satellite. The protein resides in the cilium. Functionally, the BBSome complex is thought to function as a coat complex required for sorting of specific membrane proteins to the primary cilia. The BBSome complex is required for ciliogenesis but is dispensable for centriolar satellite function. This ciliogenic function is mediated in part by the Rab8 GDP/GTP exchange factor, which localizes to the basal body and contacts the BBSome. Rab8(GTP) enters the primary cilium and promotes extension of the ciliary membrane. Firstly the BBSome associates with the ciliary membrane and binds to RAB3IP/Rabin8, the guanosyl exchange factor (GEF) for Rab8 and then the Rab8-GTP localizes to the cilium and promotes docking and fusion of carrier vesicles to the base of the ciliary membrane. The BBSome complex, together with the LTZL1, controls SMO ciliary trafficking and contributes to the sonic hedgehog (SHH) pathway regulation. Required for proper BBSome complex assembly and its ciliary localization. The sequence is that of Tetratricopeptide repeat protein 8 (TTC8) from Homo sapiens (Human).